A 90-amino-acid chain; its full sequence is MSSSITTPEGIINPPIDELLEATDSKYSLVIYAAKRARQINAYYSQLGEGLLEYVGPLVDTHVHEKPLSIALREINAGLLTSEAIEGPAQ.

This sequence belongs to the RNA polymerase subunit omega family. In terms of assembly, the RNAP catalytic core consists of 2 alpha, 1 beta, 1 beta' and 1 omega subunit. When a sigma factor is associated with the core the holoenzyme is formed, which can initiate transcription.

It carries out the reaction RNA(n) + a ribonucleoside 5'-triphosphate = RNA(n+1) + diphosphate. Its function is as follows. Promotes RNA polymerase assembly. Latches the N- and C-terminal regions of the beta' subunit thereby facilitating its interaction with the beta and alpha subunits. This chain is DNA-directed RNA polymerase subunit omega, found in Streptomyces griseus subsp. griseus (strain JCM 4626 / CBS 651.72 / NBRC 13350 / KCC S-0626 / ISP 5235).